Here is a 569-residue protein sequence, read N- to C-terminus: Proline--tRNA ligase (569 aa).

This sequence belongs to the class-II aminoacyl-tRNA synthetase family. ProS type 1 subfamily. In terms of assembly, homodimer.

The protein localises to the cytoplasm. The enzyme catalyses tRNA(Pro) + L-proline + ATP = L-prolyl-tRNA(Pro) + AMP + diphosphate. Catalyzes the attachment of proline to tRNA(Pro) in a two-step reaction: proline is first activated by ATP to form Pro-AMP and then transferred to the acceptor end of tRNA(Pro). As ProRS can inadvertently accommodate and process non-cognate amino acids such as alanine and cysteine, to avoid such errors it has two additional distinct editing activities against alanine. One activity is designated as 'pretransfer' editing and involves the tRNA(Pro)-independent hydrolysis of activated Ala-AMP. The other activity is designated 'posttransfer' editing and involves deacylation of mischarged Ala-tRNA(Pro). The misacylated Cys-tRNA(Pro) is not edited by ProRS. This chain is Proline--tRNA ligase, found in Legionella pneumophila subsp. pneumophila (strain Philadelphia 1 / ATCC 33152 / DSM 7513).